The chain runs to 86 residues: Translation initiation factor IF-1 2 (86 aa).

An S1-like domain is found at 1–72; the sequence is MAKEELLEME…SKGRITFRHI (72 aa).

It belongs to the IF-1 family. In terms of assembly, component of the 30S ribosomal translation pre-initiation complex which assembles on the 30S ribosome in the order IF-2 and IF-3, IF-1 and N-formylmethionyl-tRNA(fMet); mRNA recruitment can occur at any time during PIC assembly.

The protein localises to the cytoplasm. One of the essential components for the initiation of protein synthesis. Stabilizes the binding of IF-2 and IF-3 on the 30S subunit to which N-formylmethionyl-tRNA(fMet) subsequently binds. Helps modulate mRNA selection, yielding the 30S pre-initiation complex (PIC). Upon addition of the 50S ribosomal subunit IF-1, IF-2 and IF-3 are released leaving the mature 70S translation initiation complex. The protein is Translation initiation factor IF-1 2 of Polynucleobacter asymbioticus (strain DSM 18221 / CIP 109841 / QLW-P1DMWA-1) (Polynucleobacter necessarius subsp. asymbioticus).